We begin with the raw amino-acid sequence, 538 residues long: Probable ribonuclease 3 (538 aa).

RNase III domains lie at 24–149 (IKSY…LNFG) and 238–381 (ASQM…EGYL). Positions 408–477 (LISQNIEVLH…NYKDLILQLY (70 aa)) constitute a DRBM domain.

The protein belongs to the ribonuclease III family.

The enzyme catalyses Endonucleolytic cleavage to 5'-phosphomonoester.. In terms of biological role, digests double-stranded RNA. This Acanthamoeba polyphaga (Amoeba) protein is Probable ribonuclease 3.